The sequence spans 72 residues: MRRVSWSTVLIVVVMVSLFFVEHVVVPAAAGRVLTEKSGDGSATMTVEKMKSTVDSWFQRLASGPSPRGRGH.

An N-terminal signal peptide occupies residues 1-30 (MRRVSWSTVLIVVVMVSLFFVEHVVVPAAA). 2 positions are modified to 4-hydroxyproline: P65 and P67.

Contains 4-hydroxyproline; hydroxylated on Pro-65 and Pro-67. As to expression, expressed in guard cells, hydathodes, leaf trichomes, and vascular tissues of leaves and roots.

It is found in the secreted. The protein resides in the extracellular space. The protein localises to the apoplast. Its function is as follows. Endogenous secreted peptide that acts as elicitor of immune response and positive regulator of defense response. Amplifies the immune response triggered by flg22, the active epitope of bacterial flagellin. Acts as a negative regulator of root growth. In Arabidopsis thaliana (Mouse-ear cress), this protein is PAMP-induced secreted peptide 1.